Consider the following 680-residue polypeptide: Penicillin-binding protein 2B (680 aa).

Over 1 to 8 (MRKFNSHS) the chain is Cytoplasmic. The helical transmembrane segment at 9–29 (IPIRLNLLFSIVILLFMTIIG) threads the bilayer. The Extracellular segment spans residues 30 to 680 (RLLYMQVLNK…NLYQKYHPMN (651 aa)). The Acyl-ester intermediate role is filled by Ser386.

This sequence belongs to the transpeptidase family. As to quaternary structure, interacts with MreC in the elongasome.

The protein resides in the cell membrane. A transpeptidase that forms peptide cross-links between adjacent glycan strands in cell wall peptidoglycan (PG). Part of the elongasome machinery that synthesizes peripheral PG. The sequence is that of Penicillin-binding protein 2B from Streptococcus pneumoniae serotype 2 (strain D39 / NCTC 7466).